The primary structure comprises 154 residues: SsrA-binding protein (154 aa).

This sequence belongs to the SmpB family.

It is found in the cytoplasm. Required for rescue of stalled ribosomes mediated by trans-translation. Binds to transfer-messenger RNA (tmRNA), required for stable association of tmRNA with ribosomes. tmRNA and SmpB together mimic tRNA shape, replacing the anticodon stem-loop with SmpB. tmRNA is encoded by the ssrA gene; the 2 termini fold to resemble tRNA(Ala) and it encodes a 'tag peptide', a short internal open reading frame. During trans-translation Ala-aminoacylated tmRNA acts like a tRNA, entering the A-site of stalled ribosomes, displacing the stalled mRNA. The ribosome then switches to translate the ORF on the tmRNA; the nascent peptide is terminated with the 'tag peptide' encoded by the tmRNA and targeted for degradation. The ribosome is freed to recommence translation, which seems to be the essential function of trans-translation. The sequence is that of SsrA-binding protein from Lachnoclostridium phytofermentans (strain ATCC 700394 / DSM 18823 / ISDg) (Clostridium phytofermentans).